The primary structure comprises 159 residues: Small ribosomal subunit protein uS7 (159 aa).

It belongs to the universal ribosomal protein uS7 family. As to quaternary structure, part of the 30S ribosomal subunit. Contacts proteins S9 and S11.

Its function is as follows. One of the primary rRNA binding proteins, it binds directly to 16S rRNA where it nucleates assembly of the head domain of the 30S subunit. Is located at the subunit interface close to the decoding center, probably blocks exit of the E-site tRNA. In Endomicrobium trichonymphae, this protein is Small ribosomal subunit protein uS7.